A 149-amino-acid chain; its full sequence is D-aminoacyl-tRNA deacylase (149 aa).

A Gly-cisPro motif, important for rejection of L-amino acids motif is present at residues 137–138 (GP).

Belongs to the DTD family. In terms of assembly, homodimer.

Its subcellular location is the cytoplasm. The catalysed reaction is glycyl-tRNA(Ala) + H2O = tRNA(Ala) + glycine + H(+). It catalyses the reaction a D-aminoacyl-tRNA + H2O = a tRNA + a D-alpha-amino acid + H(+). An aminoacyl-tRNA editing enzyme that deacylates mischarged D-aminoacyl-tRNAs. Also deacylates mischarged glycyl-tRNA(Ala), protecting cells against glycine mischarging by AlaRS. Acts via tRNA-based rather than protein-based catalysis; rejects L-amino acids rather than detecting D-amino acids in the active site. By recycling D-aminoacyl-tRNA to D-amino acids and free tRNA molecules, this enzyme counteracts the toxicity associated with the formation of D-aminoacyl-tRNA entities in vivo and helps enforce protein L-homochirality. In Leuconostoc mesenteroides subsp. mesenteroides (strain ATCC 8293 / DSM 20343 / BCRC 11652 / CCM 1803 / JCM 6124 / NCDO 523 / NBRC 100496 / NCIMB 8023 / NCTC 12954 / NRRL B-1118 / 37Y), this protein is D-aminoacyl-tRNA deacylase.